The primary structure comprises 525 residues: MSL complex subunit 3 (525 aa).

One can recognise a Tudor-knot domain in the interval 13–72; sequence SGEKVLCFEPDPTKARVLYDAKIIDVIIGKDEKGRKIPEYLIHFNGWNRSWDRWAAEEHV. Disordered stretches follow at residues 119–148 and 302–383; these read KEKS…KEHR and TTTT…DTSA. Residues 136-146 are compositionally biased toward basic and acidic residues; that stretch reads SCGEKNGGIKE. The MRG domain occupies 172-521; it reads DERTITIDIP…CEAHYSTKNP (350 aa). The required for the histone acetyltransferase activity of the MSL complex stretch occupies residues 294 to 444; that stretch reads FFLPIKESTT…WKLVPDNYPP (151 aa). Residues Ser-313 and Ser-315 each carry the phosphoserine modification. The segment covering 320–332 has biased composition (low complexity); it reads NPSTPQSTESQPP. Phosphoserine is present on residues Ser-371 and Ser-404. Thr-409 carries the phosphothreonine modification. Phosphoserine is present on residues Ser-411 and Ser-415.

As to quaternary structure, component of the MSL histone acetyltransferase complex at least composed of the KAT8/MOF, MSL1/hampin, MSL2 and MSL3. Interacts (via the MRG domain) with MSL1 and KAT8/MOF. In terms of tissue distribution, in testis, expression is mostly restricted to the spermatocyte stage and only in a small portion of spermatogonia.

Its subcellular location is the nucleus. Its function is as follows. Non-catalytic component of the MSL histone acetyltransferase complex, a multiprotein complex that mediates the majority of histone H4 acetylation at 'Lys-16' (H4K16ac), an epigenetic mark that prevents chromatin compaction. The MSL complex is required for chromosome stability and genome integrity by maintaining homeostatic levels of H4K16ac. The MSL complex is also involved in gene dosage by promoting up-regulation of genes expressed by the X chromosome. X up-regulation is required to compensate for autosomal biallelic expression. The MSL complex also participates in gene dosage compensation by promoting expression of Tsix non-coding RNA. Acts as a histone reader that specifically recognizes and binds histone H4 monomethylated at 'Lys-20' (H4K20Me1) in a DNA-dependent manner and is proposed to be involved in chromosomal targeting of the MSL complex. May play a role X inactivation in females. The protein is MSL complex subunit 3 of Mus musculus (Mouse).